The sequence spans 119 residues: Large ribosomal subunit protein bL20 (119 aa).

Belongs to the bacterial ribosomal protein bL20 family.

Its function is as follows. Binds directly to 23S ribosomal RNA and is necessary for the in vitro assembly process of the 50S ribosomal subunit. It is not involved in the protein synthesizing functions of that subunit. This Bordetella avium (strain 197N) protein is Large ribosomal subunit protein bL20.